Here is a 249-residue protein sequence, read N- to C-terminus: Proteasome subunit alpha (249 aa).

The segment at 229 to 249 (EAREAEEAAEAQSSEDGGATD) is disordered.

Belongs to the peptidase T1A family. The 20S proteasome core is composed of 14 alpha and 14 beta subunits that assemble into four stacked heptameric rings, resulting in a barrel-shaped structure. The two inner rings, each composed of seven catalytic beta subunits, are sandwiched by two outer rings, each composed of seven alpha subunits. The catalytic chamber with the active sites is on the inside of the barrel. Has a gated structure, the ends of the cylinder being occluded by the N-termini of the alpha-subunits. Is capped by the proteasome-associated ATPase, ARC.

The protein resides in the cytoplasm. It participates in protein degradation; proteasomal Pup-dependent pathway. With respect to regulation, the formation of the proteasomal ATPase ARC-20S proteasome complex, likely via the docking of the C-termini of ARC into the intersubunit pockets in the alpha-rings, may trigger opening of the gate for substrate entry. Interconversion between the open-gate and close-gate conformations leads to a dynamic regulation of the 20S proteasome proteolysis activity. Component of the proteasome core, a large protease complex with broad specificity involved in protein degradation. This is Proteasome subunit alpha from Thermobifida fusca (strain YX).